The primary structure comprises 234 residues: Sugar fermentation stimulation protein A (234 aa).

Residues 201–220 (LLSEAQQRGVEILAYKAEIS) constitute a DNA-binding region (H-T-H motif).

It belongs to the SfsA family.

In terms of biological role, binds to DNA non-specifically. Could be a regulatory factor involved in maltose metabolism. This is Sugar fermentation stimulation protein A from Shigella flexneri serotype 5b (strain 8401).